The sequence spans 93 residues: Large ribosomal subunit protein eL43 (93 aa).

A C4-type zinc finger spans residues C39–C60.

This sequence belongs to the eukaryotic ribosomal protein eL43 family.

This is Large ribosomal subunit protein eL43 (RPL37A) from Brassica rapa subsp. rapa (Turnip).